The primary structure comprises 506 residues: Cytochrome P450 71B8 (506 aa).

A helical membrane pass occupies residues 5–25 (ILLCFFFLFPLLLTLFKKLLP). A heme-binding site is contributed by Cys-443.

Belongs to the cytochrome P450 family. The cofactor is heme.

Its subcellular location is the membrane. The polypeptide is Cytochrome P450 71B8 (CYP71B8) (Arabidopsis thaliana (Mouse-ear cress)).